A 442-amino-acid polypeptide reads, in one-letter code: D-serine dehydratase 1 (442 aa).

The residue at position 118 (Lys118) is an N6-(pyridoxal phosphate)lysine.

This sequence belongs to the serine/threonine dehydratase family. DsdA subfamily. Monomer. It depends on pyridoxal 5'-phosphate as a cofactor.

The enzyme catalyses D-serine = pyruvate + NH4(+). The chain is D-serine dehydratase 1 from Escherichia coli O6:K15:H31 (strain 536 / UPEC).